The chain runs to 73 residues: MIYKVLYQKDKIVNPRRETTQTLYMEADNMVEARTMVEDNTPYNIELIQELTGNSLTYEKEHADFKLTKFDKK.

The protein belongs to the RNA polymerase subunit epsilon family. As to quaternary structure, RNAP is composed of a core of 2 alpha, a beta and a beta' subunit. The core is associated with a delta subunit, and at least one of epsilon or omega. When a sigma factor is associated with the core the holoenzyme is formed, which can initiate transcription.

It carries out the reaction RNA(n) + a ribonucleoside 5'-triphosphate = RNA(n+1) + diphosphate. A non-essential component of RNA polymerase (RNAP). The sequence is that of DNA-directed RNA polymerase subunit epsilon from Lactobacillus acidophilus (strain ATCC 700396 / NCK56 / N2 / NCFM).